The chain runs to 649 residues: 1-deoxy-D-xylulose-5-phosphate synthase (649 aa).

Residues histidine 84 and 125–127 each bind thiamine diphosphate; that span reads GHS. Mg(2+) is bound at residue aspartate 156. Thiamine diphosphate contacts are provided by residues 157 to 158, asparagine 185, phenylalanine 292, and glutamate 385; that span reads GS. Asparagine 185 is a binding site for Mg(2+).

This sequence belongs to the transketolase family. DXPS subfamily. Homodimer. Mg(2+) serves as cofactor. Thiamine diphosphate is required as a cofactor.

It catalyses the reaction D-glyceraldehyde 3-phosphate + pyruvate + H(+) = 1-deoxy-D-xylulose 5-phosphate + CO2. It functions in the pathway metabolic intermediate biosynthesis; 1-deoxy-D-xylulose 5-phosphate biosynthesis; 1-deoxy-D-xylulose 5-phosphate from D-glyceraldehyde 3-phosphate and pyruvate: step 1/1. Its function is as follows. Catalyzes the acyloin condensation reaction between C atoms 2 and 3 of pyruvate and glyceraldehyde 3-phosphate to yield 1-deoxy-D-xylulose-5-phosphate (DXP). The polypeptide is 1-deoxy-D-xylulose-5-phosphate synthase (Saccharophagus degradans (strain 2-40 / ATCC 43961 / DSM 17024)).